Reading from the N-terminus, the 509-residue chain is Bifunctional pantoate ligase/cytidylate kinase (509 aa).

The interval 1-275 (MKKLIIRKTE…CGETRLIDHV (275 aa)) is pantoate--beta-alanine ligase. Residue 29–36 (MGNLHDGH) coordinates ATP. Residue histidine 36 is the Proton donor of the active site. Position 61 (glutamine 61) interacts with (R)-pantoate. Glutamine 61 lines the beta-alanine pocket. 149–152 (GEKD) provides a ligand contact to ATP. Position 155 (glutamine 155) interacts with (R)-pantoate. 186 to 189 (LSSR) contacts ATP. The interval 276 to 509 (FLMKRRPIIA…DKIPKESEIK (234 aa)) is cytidylate kinase.

The protein in the N-terminal section; belongs to the pantothenate synthetase family. This sequence in the C-terminal section; belongs to the cytidylate kinase family. Type 1 subfamily.

It is found in the cytoplasm. It carries out the reaction (R)-pantoate + beta-alanine + ATP = (R)-pantothenate + AMP + diphosphate + H(+). The catalysed reaction is CMP + ATP = CDP + ADP. The enzyme catalyses dCMP + ATP = dCDP + ADP. It functions in the pathway cofactor biosynthesis; (R)-pantothenate biosynthesis; (R)-pantothenate from (R)-pantoate and beta-alanine: step 1/1. In terms of biological role, catalyzes the condensation of pantoate with beta-alanine in an ATP-dependent reaction via a pantoyl-adenylate intermediate. Catalyzes the transfer of a phosphate group from ATP to either CMP or dCMP to form CDP or dCDP and ADP, respectively. The chain is Bifunctional pantoate ligase/cytidylate kinase from Prochlorococcus marinus (strain AS9601).